The chain runs to 32 residues: Hyaluronidase-Pk1a (32 aa).

Residue asparagine 23 is glycosylated (N-linked (GlcNAc...) asparagine).

Belongs to the glycosyl hydrolase 56 family. In terms of tissue distribution, expressed by the venom gland.

The protein localises to the secreted. It catalyses the reaction Random hydrolysis of (1-&gt;4)-linkages between N-acetyl-beta-D-glucosamine and D-glucuronate residues in hyaluronate.. In terms of biological role, hydrolyzes high molecular weight hyaluronic acid to produce small oligosaccharides. In Phoneutria keyserlingi (Brazilian wandering spider), this protein is Hyaluronidase-Pk1a.